The primary structure comprises 172 residues: 3-hydroxydecanoyl-[acyl-carrier-protein] dehydratase (172 aa).

Residue His-71 is part of the active site.

Belongs to the thioester dehydratase family. FabA subfamily. In terms of assembly, homodimer.

The protein localises to the cytoplasm. It carries out the reaction a (3R)-hydroxyacyl-[ACP] = a (2E)-enoyl-[ACP] + H2O. It catalyses the reaction (3R)-hydroxydecanoyl-[ACP] = (2E)-decenoyl-[ACP] + H2O. The enzyme catalyses (2E)-decenoyl-[ACP] = (3Z)-decenoyl-[ACP]. Its pathway is lipid metabolism; fatty acid biosynthesis. Functionally, necessary for the introduction of cis unsaturation into fatty acids. Catalyzes the dehydration of (3R)-3-hydroxydecanoyl-ACP to E-(2)-decenoyl-ACP and then its isomerization to Z-(3)-decenoyl-ACP. Can catalyze the dehydratase reaction for beta-hydroxyacyl-ACPs with saturated chain lengths up to 16:0, being most active on intermediate chain length. The chain is 3-hydroxydecanoyl-[acyl-carrier-protein] dehydratase from Vibrio vulnificus (strain CMCP6).